The sequence spans 130 residues: Small ribosomal subunit protein uS9 (130 aa).

Belongs to the universal ribosomal protein uS9 family.

The protein is Small ribosomal subunit protein uS9 of Aromatoleum aromaticum (strain DSM 19018 / LMG 30748 / EbN1) (Azoarcus sp. (strain EbN1)).